A 412-amino-acid polypeptide reads, in one-letter code: Multidrug resistance protein MdtG (412 aa).

The next 10 helical transmembrane spans lie at 20 to 40, 62 to 82, 96 to 116, 119 to 139, 150 to 170, 177 to 197, 225 to 245, 260 to 280, 294 to 314, and 382 to 402; these read LFVAWIGCFLTGAAFSLIMPF, LVFSITFLFSAIASPFWGGLA, LGMSIVMVLMGFAQNIWQFLI, ALLGLLGGFVPNANALIATQI, TLSTGGVSGALLGPLVGGLLA, PVFFITASVLFLCFIMTLYFI, VLCLFVTTMIIQVATGSIAPI, LAFISGMIASVPGVAALMSAP, ILVAMMALSVLLLIPMALVQT, and TVFFVTAMVVLFNAGYSYWCL.

The protein belongs to the major facilitator superfamily. DHA1 family. MdtG (TC 2.A.1.2.20) subfamily.

It localises to the cell inner membrane. This chain is Multidrug resistance protein MdtG, found in Rahnella sp. (strain Y9602).